Here is a 126-residue protein sequence, read N- to C-terminus: Ejaculatory bulb-specific protein 3 (126 aa).

Positions 1–17 are cleaved as a signal peptide; that stretch reads MKMILALVVLGLVLVAA.

This sequence belongs to the insect A10/OS-D protein family. Specifically expressed in the ejaculatory bulb and seminal fluid.

The protein localises to the secreted. Functionally, protein component of the posterior mating plug. This chain is Ejaculatory bulb-specific protein 3, found in Drosophila melanogaster (Fruit fly).